Consider the following 365-residue polypeptide: Snurportin-1 (365 aa).

Residues 10–72 (GGVALAAPNS…RLAEGDWAGV (63 aa)) enclose the IBB domain. Disordered stretches follow at residues 15 to 34 (AAPN…KGRG) and 69 to 90 (WAGV…EMEV). Residues 73–90 (ESDEDGGEDGDGEEEMEV) show a composition bias toward acidic residues. Positions 129-131 (GKR) are interaction with m3G-cap structure. Residues 211–333 (LSSKIQEEEG…GKAQPSAEAA (123 aa)) form a necessary for binding to the m3G-cap structure region. The tract at residues 317–365 (RSKKLAAGKAQPSAEAAARNGHYELEHLSTPQPANSAQGQEEAGSQMEN) is disordered. Over residues 345–355 (STPQPANSAQG) the composition is skewed to polar residues.

It belongs to the snurportin family.

The protein localises to the nucleus. Its subcellular location is the cytoplasm. Functions as an U snRNP-specific nuclear import adapter. Involved in the trimethylguanosine (m3G)-cap-dependent nuclear import of U snRNPs. Binds specifically to the terminal m3G-cap U snRNAs. This Gallus gallus (Chicken) protein is Snurportin-1 (SNUPN).